A 297-amino-acid polypeptide reads, in one-letter code: UBX domain-containing protein 1 (297 aa).

A2 is modified (N-acetylalanine). Positions A2–H42 constitute a UBA domain. Residues W38–C214 are disordered. Residues H42–L52 are compositionally biased toward acidic residues. Positions E43–S297 are interaction with BRCA1. Composition is skewed to basic and acidic residues over residues L86–K122 and K137–K177. The residue at position 199 (S199) is a Phosphoserine. The residue at position 200 (S200) is a Phosphoserine; by MAPK12. T207 and T229 each carry phosphothreonine. The UBX domain occupies R209 to V291. S270 is subject to Phosphoserine.

In terms of assembly, interacts with MAVS; this interaction prevents MAVS oligomerization and thus disrupts the RLR signaling pathway. Interacts with CUL1; this interaction inhibits CUL1-mediated degradation of NF-kappa-B inhibitors. Interacts with BIRC2/c-IAP1; this interaction prevents TNFalpha-stimulated RIP1 ubiquitination and subsequent NF-kappa-B activation. Component of a complex required to couple retrotranslocation, ubiquitination and deglycosylation composed of NGLY1, SAKS1, AMFR, VCP and RAD23B. Interacts with HOMER2. Interacts directly with VCP. Interacts with BRCA1 and BARD1; interaction takes place when BRCA1 is not autoubiquitinated but is strongly enhanced in the presence of autoubiquitinated BRCA1.

The protein resides in the cytoplasm. Ubiquitin-binding protein that plays a role in the modulation of innate immune response. Blocks both the RIG-I-like receptors (RLR) and NF-kappa-B pathways. Following viral infection, UBXN1 is induced and recruited to the RLR component MAVS. In turn, interferes with MAVS oligomerization, and disrupts the MAVS/TRAF3/TRAF6 signalosome. This function probably serves as a brake to prevent excessive RLR signaling. Interferes with the TNFalpha-triggered NF-kappa-B pathway by interacting with cellular inhibitors of apoptosis proteins (cIAPs) and thereby inhibiting their recruitment to TNFR1. Also prevents the activation of NF-kappa-B by associating with CUL1 and thus inhibiting NF-kappa-B inhibitor alpha/NFKBIA degradation that remains bound to NF-kappa-B. Interacts with the BRCA1-BARD1 heterodimer and regulates its activity. Specifically binds 'Lys-6'-linked polyubiquitin chains. Interaction with autoubiquitinated BRCA1 leads to the inhibition of the E3 ubiquitin-protein ligase activity of the BRCA1-BARD1 heterodimer. Component of a complex required to couple deglycosylation and proteasome-mediated degradation of misfolded proteins in the endoplasmic reticulum that are retrotranslocated in the cytosol. The protein is UBX domain-containing protein 1 (Ubxn1) of Mus musculus (Mouse).